The chain runs to 234 residues: Small ribosomal subunit protein uS3 (234 aa).

Positions 17-86 (VEKFLTKELK…SPQVEVQQVQ (70 aa)) constitute a KH type-2 domain.

This sequence belongs to the universal ribosomal protein uS3 family. In terms of assembly, part of the 30S ribosomal subunit.

Binds the lower part of the 30S subunit head. The chain is Small ribosomal subunit protein uS3 from Methanoculleus marisnigri (strain ATCC 35101 / DSM 1498 / JR1).